A 484-amino-acid polypeptide reads, in one-letter code: L-amino-acid oxidase (484 aa).

Cysteines 8 and 171 form a disulfide. FAD contacts are provided by residues 41–42, 61–62, and arginine 69; these read MS and EA. Residue histidine 73 participates in Zn(2+) binding. 85–88 is an FAD binding site; sequence GPMR. Substrate is bound at residue arginine 88. A glycan (N-linked (GlcNAc...) asparagine) is linked at asparagine 170. Histidine 221 lines the substrate pocket. Residue valine 259 coordinates FAD. Glutamate 277 contacts Zn(2+). A disulfide bridge connects residues cysteine 329 and cysteine 410. Residue tyrosine 370 coordinates substrate. FAD-binding positions include glutamate 455 and 462-467; that span reads GWIDST. 462–463 is a substrate binding site; it reads GW.

The protein belongs to the flavin monoamine oxidase family. FIG1 subfamily. In terms of assembly, homodimer; non-covalently linked. FAD serves as cofactor. As to expression, expressed by the venom gland.

It localises to the secreted. The catalysed reaction is an L-alpha-amino acid + O2 + H2O = a 2-oxocarboxylate + H2O2 + NH4(+). Functionally, catalyzes an oxidative deamination of predominantly hydrophobic and aromatic L-amino acids, thus producing hydrogen peroxide that may contribute to the diverse toxic effects of this enzyme. Exhibits diverse biological activities, such as hemorrhage, hemolysis, edema, apoptosis of vascular endothelial cells or tumor cell lines, antibacterial and antiparasitic activities, as well as regulation of platelet aggregation. Effects of snake L-amino oxidases on platelets are controversial, since they either induce aggregation or inhibit agonist-induced aggregation. These different effects are probably due to different experimental conditions. This chain is L-amino-acid oxidase, found in Vipera ammodytes ammodytes (Western sand viper).